The following is a 500-amino-acid chain: Bifunctional protein GlmU (500 aa).

The segment at 1–242 (MPVQTAVVVL…SAKVAGANDR (242 aa)) is pyrophosphorylase. UDP-N-acetyl-alpha-D-glucosamine contacts are provided by residues 10 to 13 (LAAG), K24, Q81, and 86 to 87 (GT). D112 provides a ligand contact to Mg(2+). UDP-N-acetyl-alpha-D-glucosamine-binding residues include G151, E167, N182, and N240. A Mg(2+)-binding site is contributed by N240. The interval 243–263 (VQLSRLAAELNRRTVENWMRA) is linker. The tract at residues 264-500 (GVTVVDPSTT…KQDLKDGIEQ (237 aa)) is N-acetyltransferase. The UDP-N-acetyl-alpha-D-glucosamine site is built by R345 and K363. The Proton acceptor role is filled by H375. 2 residues coordinate UDP-N-acetyl-alpha-D-glucosamine: Y378 and N389. Residues A392, 398 to 399 (NY), S417, and A435 contribute to the acetyl-CoA site. Positions 459–500 (DGWVQRNRPGTPAAEAASAAGPHHSSDLHETEKQDLKDGIEQ) are disordered. Residues 482–500 (HSSDLHETEKQDLKDGIEQ) are compositionally biased toward basic and acidic residues.

The protein in the N-terminal section; belongs to the N-acetylglucosamine-1-phosphate uridyltransferase family. In the C-terminal section; belongs to the transferase hexapeptide repeat family. As to quaternary structure, homotrimer. Mg(2+) is required as a cofactor.

It is found in the cytoplasm. It catalyses the reaction alpha-D-glucosamine 1-phosphate + acetyl-CoA = N-acetyl-alpha-D-glucosamine 1-phosphate + CoA + H(+). The enzyme catalyses N-acetyl-alpha-D-glucosamine 1-phosphate + UTP + H(+) = UDP-N-acetyl-alpha-D-glucosamine + diphosphate. It functions in the pathway nucleotide-sugar biosynthesis; UDP-N-acetyl-alpha-D-glucosamine biosynthesis; N-acetyl-alpha-D-glucosamine 1-phosphate from alpha-D-glucosamine 6-phosphate (route II): step 2/2. The protein operates within nucleotide-sugar biosynthesis; UDP-N-acetyl-alpha-D-glucosamine biosynthesis; UDP-N-acetyl-alpha-D-glucosamine from N-acetyl-alpha-D-glucosamine 1-phosphate: step 1/1. It participates in bacterial outer membrane biogenesis; LPS lipid A biosynthesis. Catalyzes the last two sequential reactions in the de novo biosynthetic pathway for UDP-N-acetylglucosamine (UDP-GlcNAc). The C-terminal domain catalyzes the transfer of acetyl group from acetyl coenzyme A to glucosamine-1-phosphate (GlcN-1-P) to produce N-acetylglucosamine-1-phosphate (GlcNAc-1-P), which is converted into UDP-GlcNAc by the transfer of uridine 5-monophosphate (from uridine 5-triphosphate), a reaction catalyzed by the N-terminal domain. This Rhodococcus opacus (strain B4) protein is Bifunctional protein GlmU.